Consider the following 396-residue polypeptide: Chorismate synthase (396 aa).

NADP(+)-binding residues include Arg41 and Arg47. Residues 130-132 (RAS), Gly298, 313-317 (KPIPT), and Arg339 each bind FMN.

This sequence belongs to the chorismate synthase family. In terms of assembly, homotetramer. The cofactor is FMNH2.

It carries out the reaction 5-O-(1-carboxyvinyl)-3-phosphoshikimate = chorismate + phosphate. The protein operates within metabolic intermediate biosynthesis; chorismate biosynthesis; chorismate from D-erythrose 4-phosphate and phosphoenolpyruvate: step 7/7. Catalyzes the anti-1,4-elimination of the C-3 phosphate and the C-6 proR hydrogen from 5-enolpyruvylshikimate-3-phosphate (EPSP) to yield chorismate, which is the branch point compound that serves as the starting substrate for the three terminal pathways of aromatic amino acid biosynthesis. This reaction introduces a second double bond into the aromatic ring system. The chain is Chorismate synthase from Syntrophomonas wolfei subsp. wolfei (strain DSM 2245B / Goettingen).